Reading from the N-terminus, the 610-residue chain is Elongation factor 4 (610 aa).

A tr-type G domain is found at 15–197; it reads KSIRNFSIIA…RIINDIPYPK (183 aa). Residues 27–32 and 144–147 each bind GTP; these read DHGKST and NKID.

It belongs to the TRAFAC class translation factor GTPase superfamily. Classic translation factor GTPase family. LepA subfamily.

The protein localises to the cell membrane. The catalysed reaction is GTP + H2O = GDP + phosphate + H(+). Its function is as follows. Required for accurate and efficient protein synthesis under certain stress conditions. May act as a fidelity factor of the translation reaction, by catalyzing a one-codon backward translocation of tRNAs on improperly translocated ribosomes. Back-translocation proceeds from a post-translocation (POST) complex to a pre-translocation (PRE) complex, thus giving elongation factor G a second chance to translocate the tRNAs correctly. Binds to ribosomes in a GTP-dependent manner. The sequence is that of Elongation factor 4 from Buchnera aphidicola subsp. Acyrthosiphon pisum (strain APS) (Acyrthosiphon pisum symbiotic bacterium).